The following is a 777-amino-acid chain: Ral guanine nucleotide dissociation stimulator-like 2 (777 aa).

The disordered stretch occupies residues methionine 1 to proline 54. At serine 13 the chain carries Phosphoserine. Gly residues predominate over residues glycine 31–glycine 42. The span at glutamine 43–proline 54 shows a compositional bias: acidic residues. The 125-residue stretch at serine 88–arginine 212 folds into the N-terminal Ras-GEF domain. A Ras-GEF domain is found at leucine 243–proline 513. Position 409 is a phosphoserine (serine 409). 2 stretches are compositionally biased toward low complexity: residues serine 581–proline 610 and alanine 618–serine 632. Disordered regions lie at residues serine 581 to proline 644 and arginine 734 to lysine 766. A compositionally biased stretch (gly residues) spans glycine 633–proline 644. The Ras-associating domain maps to aspartate 648–arginine 735. A compositionally biased stretch (low complexity) spans threonine 740–serine 755.

Interacts with SAMD9.

Probable guanine nucleotide exchange factor. Putative effector of Ras and/or Rap. Associates with the GTP-bound form of Rap 1A and H-Ras in vitro. The protein is Ral guanine nucleotide dissociation stimulator-like 2 (RGL2) of Homo sapiens (Human).